Consider the following 535-residue polypeptide: Glucose-6-phosphate isomerase (535 aa).

Glu347 serves as the catalytic Proton donor. Residues His378 and Lys493 contribute to the active site.

The protein belongs to the GPI family.

It is found in the cytoplasm. It carries out the reaction alpha-D-glucose 6-phosphate = beta-D-fructose 6-phosphate. Its pathway is carbohydrate biosynthesis; gluconeogenesis. The protein operates within carbohydrate degradation; glycolysis; D-glyceraldehyde 3-phosphate and glycerone phosphate from D-glucose: step 2/4. In terms of biological role, catalyzes the reversible isomerization of glucose-6-phosphate to fructose-6-phosphate. The protein is Glucose-6-phosphate isomerase of Chlamydia felis (strain Fe/C-56) (Chlamydophila felis).